The following is a 210-amino-acid chain: Pyridoxine/pyridoxamine 5'-phosphate oxidase (210 aa).

Residues Arg-7–Tyr-10 and Lys-65 contribute to the substrate site. FMN-binding positions include Arg-60–Lys-65, Phe-75–Thr-76, Arg-81, Lys-82, and Gln-104. Tyr-122, Arg-126, and Ser-130 together coordinate substrate. FMN is bound by residues Gln-139 to Ser-140 and Trp-183. Residue Arg-189–His-191 coordinates substrate. Residue Arg-193 participates in FMN binding.

Belongs to the pyridoxamine 5'-phosphate oxidase family. In terms of assembly, homodimer. It depends on FMN as a cofactor.

It catalyses the reaction pyridoxamine 5'-phosphate + O2 + H2O = pyridoxal 5'-phosphate + H2O2 + NH4(+). It carries out the reaction pyridoxine 5'-phosphate + O2 = pyridoxal 5'-phosphate + H2O2. The protein operates within cofactor metabolism; pyridoxal 5'-phosphate salvage; pyridoxal 5'-phosphate from pyridoxamine 5'-phosphate: step 1/1. It participates in cofactor metabolism; pyridoxal 5'-phosphate salvage; pyridoxal 5'-phosphate from pyridoxine 5'-phosphate: step 1/1. Catalyzes the oxidation of either pyridoxine 5'-phosphate (PNP) or pyridoxamine 5'-phosphate (PMP) into pyridoxal 5'-phosphate (PLP). This chain is Pyridoxine/pyridoxamine 5'-phosphate oxidase, found in Actinobacillus succinogenes (strain ATCC 55618 / DSM 22257 / CCUG 43843 / 130Z).